The following is an 818-amino-acid chain: Phenylalanine--tRNA ligase beta subunit (818 aa).

The tRNA-binding domain occupies 39–148 (AAELQKFEVA…EDAVVGENFT (110 aa)). One can recognise a B5 domain in the interval 423 to 498 (PQKKPLDFSA…RIYGYDKIES (76 aa)). Mg(2+) contacts are provided by Asp-476, Asp-482, Glu-485, and Glu-486. The FDX-ACB domain occupies 724 to 817 (SDFQANFRDY…IEQKFQGTLR (94 aa)).

The protein belongs to the phenylalanyl-tRNA synthetase beta subunit family. Type 1 subfamily. As to quaternary structure, tetramer of two alpha and two beta subunits. The cofactor is Mg(2+).

The protein localises to the cytoplasm. It carries out the reaction tRNA(Phe) + L-phenylalanine + ATP = L-phenylalanyl-tRNA(Phe) + AMP + diphosphate + H(+). The sequence is that of Phenylalanine--tRNA ligase beta subunit from Rickettsia felis (strain ATCC VR-1525 / URRWXCal2) (Rickettsia azadi).